The sequence spans 433 residues: MDRKTRLSEPPTLALRLKPYKTAIQQLRSVIRALKENTTVTFLPTPSLILQTVRSHCVSKITFNSSCLYITDKSFQPKTINNSTPLLGNFMYLTSSKDLTKFYVQDISDLSAKISMCAPDFNMEFSSACVHGQDIVRESENSAVHVDLDFGVVADLLKWIGPHTRVKRNVKKAPCPTGTVQILVHAGPPAIKFILTNGSELEFTANNRVSFHGVKNMRINVQLKNFYQTLLNCAVTKLPCTLRIVTEHDTLLYVASRNGLFAVENFLTEEPFQRGDPFDKNYVGNSGKSRGGGGGSGSLSSLANAGGLHDDGPGLDNDIMNEPMGLGGLGGGGGGGGKKHDRGGGGGSGTRKMSSGGGGGDHDHGLSSKEKYEQHKITSYLTSKGGSGGGGGGGGGGLDRNSGNYFNDAKEESDSEDSVTFEFVPNTKKQKCG.

A disordered region spans residues 274–433; that stretch reads RGDPFDKNYV…VPNTKKQKCG (160 aa). Positions 298 to 307 are enriched in low complexity; sequence SLSSLANAGG. 2 stretches are compositionally biased toward gly residues: residues 325–336 and 344–359; these read GLGGLGGGGGGG and GGGG…GGGG. The span at 360 to 376 shows a compositional bias: basic and acidic residues; that stretch reads GDHDHGLSSKEKYEQHK. The span at 385–398 shows a compositional bias: gly residues; that stretch reads GGSGGGGGGGGGGL.

It belongs to the herpesviridae polymerase accessory protein family. As to quaternary structure, forms homodimers. Interacts with host SMARCB1. Interacts with host NCL/nucleolin; this interaction is important for the organization of proteins within viral replication compartments. Interacts with UL112/UL113; this interaction is necessary for efficient viral DNA replication. Interacts with UL84. Interacts with the uracil DNA glycosylase UL114. Interacts with the DNA polymerase catalytic subunit UL54. Interacts with host IRF3. Interacts with host RELA. Post-translationally, phosphorylated by UL97 on serine residues, phosphorylation seems important for UL44 nuclear entry but does not directly affect its role in replication. Sumoylated. Sumoylation on Lys-410 increases viral DNA replication.

Its subcellular location is the virion. The protein localises to the host nucleus. Functionally, accessory subunit of the DNA polymerase that plays an essential role in viral DNA replication and acts by increasing the processivity of polymerization. Forms dimers that binds to double-stranded DNA and UL54 specifically to stimulates long chain DNA synthesis efficiently. Plays an important role in maintaining the structure of viral replication compartments by interacting with host nucleolin/NUC. In addition, suppresses innate immune responses through effects on host IRF3 and NF-kappa-B. Mechanistically, interfere with the binding of IRF3 and the p65 NF-kappa-B subunit to the promoters of antiviral genes, thereby inhibiting the expression of these genes. The protein is DNA polymerase processivity factor (UL44) of Human cytomegalovirus (strain Merlin) (HHV-5).